Consider the following 194-residue polypeptide: Xanthine phosphoribosyltransferase (194 aa).

Xanthine is bound by residues leucine 20 and asparagine 27. Position 128 to 132 (128 to 132 (ANGQA)) interacts with 5-phospho-alpha-D-ribose 1-diphosphate. Xanthine is bound at residue lysine 156.

The protein belongs to the purine/pyrimidine phosphoribosyltransferase family. Xpt subfamily. In terms of assembly, homodimer.

It is found in the cytoplasm. It catalyses the reaction XMP + diphosphate = xanthine + 5-phospho-alpha-D-ribose 1-diphosphate. It participates in purine metabolism; XMP biosynthesis via salvage pathway; XMP from xanthine: step 1/1. In terms of biological role, converts the preformed base xanthine, a product of nucleic acid breakdown, to xanthosine 5'-monophosphate (XMP), so it can be reused for RNA or DNA synthesis. The protein is Xanthine phosphoribosyltransferase of Geobacillus thermodenitrificans (strain NG80-2).